A 195-amino-acid polypeptide reads, in one-letter code: Probable GTP-binding protein EngB (195 aa).

One can recognise an EngB-type G domain in the interval 24 to 195 (ELPEIALAGR…EAWDAILEKL (172 aa)). GTP contacts are provided by residues 32–39 (GRSNVGKS), 59–63 (GKTQL), 77–80 (DVPG), 144–147 (TKAD), and 176–178 (FSS). The Mg(2+) site is built by Ser-39 and Thr-61.

This sequence belongs to the TRAFAC class TrmE-Era-EngA-EngB-Septin-like GTPase superfamily. EngB GTPase family. Mg(2+) is required as a cofactor.

In terms of biological role, necessary for normal cell division and for the maintenance of normal septation. The protein is Probable GTP-binding protein EngB of Streptococcus pneumoniae (strain JJA).